The following is a 244-amino-acid chain: Uridylate kinase (244 aa).

18-21 is an ATP binding site; it reads KVSG. Glycine 60 is a binding site for UMP. Glycine 61 and arginine 65 together coordinate ATP. UMP-binding positions include aspartate 80 and 141–148; that span reads TGNPFCTT. Positions 168, 169, 174, and 177 each coordinate ATP.

It belongs to the UMP kinase family. In terms of assembly, homohexamer.

Its subcellular location is the cytoplasm. It carries out the reaction UMP + ATP = UDP + ADP. It participates in pyrimidine metabolism; CTP biosynthesis via de novo pathway; UDP from UMP (UMPK route): step 1/1. Inhibited by UTP. In terms of biological role, catalyzes the reversible phosphorylation of UMP to UDP. In Rickettsia typhi (strain ATCC VR-144 / Wilmington), this protein is Uridylate kinase.